The sequence spans 90 residues: UPF0237 protein MK1213 (90 aa).

Residues 5–79 (VVTVIGADRP…EELGVDVIVQ (75 aa)) enclose the ACT domain.

This sequence belongs to the UPF0237 family.

This is UPF0237 protein MK1213 from Methanopyrus kandleri (strain AV19 / DSM 6324 / JCM 9639 / NBRC 100938).